A 387-amino-acid chain; its full sequence is GTPase Obg (387 aa).

The 159-residue stretch at 1–159 folds into the Obg domain; the sequence is MKFVDEAVIR…RSLRLELMLL (159 aa). In terms of domain architecture, OBG-type G spans 160 to 333; sequence ADVGLLGMPN…LALKLMDFID (174 aa). GTP is bound by residues 166–173, 191–195, 213–216, 283–286, and 314–316; these read GMPNAGKS, FTTLV, DIPG, NKTD, and SAY. 2 residues coordinate Mg(2+): S173 and T193.

The protein belongs to the TRAFAC class OBG-HflX-like GTPase superfamily. OBG GTPase family. Monomer. Mg(2+) is required as a cofactor.

The protein resides in the cytoplasm. Functionally, an essential GTPase which binds GTP, GDP and possibly (p)ppGpp with moderate affinity, with high nucleotide exchange rates and a fairly low GTP hydrolysis rate. Plays a role in control of the cell cycle, stress response, ribosome biogenesis and in those bacteria that undergo differentiation, in morphogenesis control. The chain is GTPase Obg from Shewanella loihica (strain ATCC BAA-1088 / PV-4).